The chain runs to 300 residues: Acetylglutamate kinase (300 aa).

Substrate-binding positions include 68-69, R90, and N195; that span reads GG.

This sequence belongs to the acetylglutamate kinase family. ArgB subfamily.

The protein localises to the cytoplasm. The enzyme catalyses N-acetyl-L-glutamate + ATP = N-acetyl-L-glutamyl 5-phosphate + ADP. It participates in amino-acid biosynthesis; L-arginine biosynthesis; N(2)-acetyl-L-ornithine from L-glutamate: step 2/4. Its function is as follows. Catalyzes the ATP-dependent phosphorylation of N-acetyl-L-glutamate. The protein is Acetylglutamate kinase of Azotobacter vinelandii (strain DJ / ATCC BAA-1303).